The sequence spans 156 residues: Ribosomal RNA large subunit methyltransferase H (156 aa).

S-adenosyl-L-methionine is bound by residues Leu-73, Gly-104, and 123–128 (LSKLTL).

The protein belongs to the RNA methyltransferase RlmH family. In terms of assembly, homodimer.

It is found in the cytoplasm. The catalysed reaction is pseudouridine(1915) in 23S rRNA + S-adenosyl-L-methionine = N(3)-methylpseudouridine(1915) in 23S rRNA + S-adenosyl-L-homocysteine + H(+). Its function is as follows. Specifically methylates the pseudouridine at position 1915 (m3Psi1915) in 23S rRNA. The protein is Ribosomal RNA large subunit methyltransferase H of Idiomarina loihiensis (strain ATCC BAA-735 / DSM 15497 / L2-TR).